Here is a 23-residue protein sequence, read N- to C-terminus: GLLPKVKLVPEQISFILSTRENR.

It belongs to the AB hydrolase superfamily. Lipase family. In terms of processing, contains six disulfide bonds. Expressed by the venom gland.

Its subcellular location is the secreted. It carries out the reaction a 1,2-diacyl-sn-glycero-3-phosphocholine + H2O = a 2-acyl-sn-glycero-3-phosphocholine + a fatty acid + H(+). The enzyme catalyses 1-(9Z-octadecenoyl)-2-hexadecanoyl-sn-glycero-3-phosphocholine + H2O = 2-hexadecanoyl-sn-glycero-3-phosphocholine + (9Z)-octadecenoate + H(+). The catalysed reaction is a 1-acyl-sn-glycero-3-phosphocholine + H2O = sn-glycerol 3-phosphocholine + a fatty acid + H(+). The protein operates within phospholipid metabolism. Its activity is regulated as follows. Activity is maximal in the presence of calcium. However, unlike phospholipases A2 whose catalytic activity is strictly calcium-dependent, this enzyme shows considerable catalytic activity on phosphatidylcholine emulsified in calcium free solution; the catalytic activity of VT-1 assayed in the absence of calcium ions is 18-20% of that assayed in solution containing calcium ions. Catalyzes the hydrolysis of glycerophospholipids such as phosphatidylcholine (1,2-diacyl-sn-glycero-3-phosphocholine) and has a moderate activity to hydrolyze lysoglycerophospholipids such as lysophosphatidylcholine (1-acyl-sn-glycero-3-phosphocholine), but is unable to hydrolyze sphingomyelin. Liberates the fatty acid from the sn-1 position of 1,2-diacyl-sn-glycero-3-phosphocholine mainly, indicating phospholipase activity of the A1 type. In addition to acting as an allergen, it possesses a moderate hemolytic activity on red blood cells of mice (3% of hemolysis at 3.0 ug/ml). The polypeptide is Phospholipase A1 verutoxin-1 (Vespa velutina (Asian yellow-legged hornet)).